Here is a 481-residue protein sequence, read N- to C-terminus: Arylsulfatase (481 aa).

Positions 11, 12, and 51 each coordinate Ca(2+). The active-site Nucleophile is Cys51. Cys51 is modified (3-oxoalanine (Cys)). His102 is an active-site residue. Asp302 and His303 together coordinate Ca(2+).

This sequence belongs to the sulfatase family. The cofactor is Ca(2+). Post-translationally, the conversion to 3-oxoalanine (also known as C-formylglycine, FGly), of a serine or cysteine residue in prokaryotes and of a cysteine residue in eukaryotes, is critical for catalytic activity.

It catalyses the reaction an aryl sulfate + H2O = a phenol + sulfate + H(+). Functionally, has sulfatase activity toward para-nitrophenyl sulfate, which is increased in presence of calcium ion. The polypeptide is Arylsulfatase (Clostridium perfringens (strain 13 / Type A)).